The primary structure comprises 199 residues: Hematopoietic prostaglandin D synthase (199 aa).

A GST N-terminal domain is found at 2 to 79 (PNYKLTYFNM…YLTKNTDLAG (78 aa)). Glutathione-binding positions include tyrosine 8, arginine 14, tryptophan 39, 49 to 51 (GKI), and 63 to 64 (QS). One can recognise a GST C-terminal domain in the interval 81 to 199 (TEMEQCHVDA…WIKRRPQTKL (119 aa)).

This sequence belongs to the GST superfamily. Sigma family. In terms of assembly, homodimer. Requires glutathione as cofactor. In terms of tissue distribution, expressed in a number of megakaryocytic cell lines but not in platelets. Highly expressed in adipose tissue, macrophages and placenta. Also expressed at lower levels in lung, heart, lymph nodes, appendix, bone marrow and fetal liver.

The protein resides in the cytoplasm. It carries out the reaction prostaglandin H2 = prostaglandin D2. The enzyme catalyses RX + glutathione = an S-substituted glutathione + a halide anion + H(+). It catalyses the reaction 2-glyceryl-prostaglandin H2 = 2-glyceryl-prostaglandin D2. With respect to regulation, prostaglandin PGD2 synthesis is stimulated by calcium and magnesium ions. One calcium or magnesium ion is bound between the subunits of the homodimer. The interactions with the protein are for the most part mediated via water molecules. Magnesium increases the affinity for glutathione, while calcium has no effect on the affinity for glutathione. In terms of biological role, bifunctional enzyme which catalyzes both the conversion of PGH2 to PGD2, a prostaglandin involved in smooth muscle contraction/relaxation and a potent inhibitor of platelet aggregation, and the conjugation of glutathione with a wide range of aryl halides and organic isothiocyanates. Also exhibits low glutathione-peroxidase activity towards cumene hydroperoxide. The protein is Hematopoietic prostaglandin D synthase of Homo sapiens (Human).